An 896-amino-acid polypeptide reads, in one-letter code: DNA mismatch repair protein MutS (896 aa).

Position 599–606 (599–606) interacts with ATP; that stretch reads GPNMAGKS.

It belongs to the DNA mismatch repair MutS family.

This protein is involved in the repair of mismatches in DNA. It is possible that it carries out the mismatch recognition step. This protein has a weak ATPase activity. The sequence is that of DNA mismatch repair protein MutS from Geobacillus kaustophilus (strain HTA426).